A 152-amino-acid chain; its full sequence is Spermine/spermidine N(1)-acetyltransferase (152 aa).

An N-acetyltransferase domain is found at 3-152 (INIKAVTDDN…NGEKVMVKEL (150 aa)). Residues 82–84 (FFI), 89–95 (QGKGLGK), and 122–131 (NIHAIRLYQR) contribute to the acetyl-CoA site. Catalysis depends on Tyr129, which acts as the Proton donor.

It belongs to the acetyltransferase family.

The catalysed reaction is an alkane-alpha,omega-diamine + acetyl-CoA = an N-acetylalkane-alpha,omega-diamine + CoA + H(+). It catalyses the reaction spermine + acetyl-CoA = N(1)-acetylspermine + CoA + H(+). The enzyme catalyses spermidine + acetyl-CoA = N(1)-acetylspermidine + CoA + H(+). It functions in the pathway amine and polyamine degradation; spermine degradation. Its pathway is amine and polyamine degradation; spermidine degradation. Putrescine and N(8)-acetylspermidine are competitive inhibitors of spermidine acetylation. Its function is as follows. Acetylates both spermidine and spermine at primary propyl amine moieties, with spermine being the preferred substrate. In Bacillus subtilis (strain 168), this protein is Spermine/spermidine N(1)-acetyltransferase (bltD).